Consider the following 245-residue polypeptide: Probable phosphatase YE2421 (245 aa).

Zn(2+) is bound by residues His7, His9, His15, His40, Glu73, His101, His131, Asp192, and His194.

The protein belongs to the PHP family. Homotrimer. Zn(2+) serves as cofactor.

This chain is Probable phosphatase YE2421, found in Yersinia enterocolitica serotype O:8 / biotype 1B (strain NCTC 13174 / 8081).